The primary structure comprises 370 residues: Cytochrome b (370 aa).

4 consecutive transmembrane segments (helical) span residues 25–45, 69–90, 105–125, and 170–190; these read FGSM…FLAV, WMMQ…YIHI, WLSG…GYVL, and FFAL…LHVM. The heme b site is built by histidine 75 and histidine 89. Heme b-binding residues include histidine 174 and histidine 188. Residue histidine 193 participates in a ubiquinone binding. 4 consecutive transmembrane segments (helical) span residues 218 to 238, 280 to 300, 312 to 332, and 339 to 358; these read YKDL…ISFY, LGGA…PFTH, FMQL…WTAT, and FTMI…ISNP.

This sequence belongs to the cytochrome b family. As to quaternary structure, the cytochrome bc1 complex contains 3 respiratory subunits (MT-CYB, CYC1 and UQCRFS1), 2 core proteins (UQCRC1 and UQCRC2) and probably 6 low-molecular weight proteins. It depends on heme b as a cofactor.

The protein localises to the mitochondrion inner membrane. Component of the ubiquinol-cytochrome c reductase complex (complex III or cytochrome b-c1 complex) that is part of the mitochondrial respiratory chain. The b-c1 complex mediates electron transfer from ubiquinol to cytochrome c. Contributes to the generation of a proton gradient across the mitochondrial membrane that is then used for ATP synthesis. The protein is Cytochrome b (MT-CYB) of Corallus hortulanus enydris (Garden tree boa).